A 277-amino-acid chain; its full sequence is Large ribosomal subunit protein uL2 (277 aa).

2 disordered regions span residues 37 to 60 and 223 to 264; these read KNSTAGRNNNGHITTRHKGGGHKH and VVMN…NKRT. Positions 39-49 are enriched in polar residues; sequence STAGRNNNGHI. The segment covering 50–60 has biased composition (basic residues); it reads TTRHKGGGHKH. The span at 229-244 shows a compositional bias: basic and acidic residues; that stretch reads DHPHGGGEGRTGEARE.

It belongs to the universal ribosomal protein uL2 family. As to quaternary structure, part of the 50S ribosomal subunit. Forms a bridge to the 30S subunit in the 70S ribosome.

Functionally, one of the primary rRNA binding proteins. Required for association of the 30S and 50S subunits to form the 70S ribosome, for tRNA binding and peptide bond formation. It has been suggested to have peptidyltransferase activity; this is somewhat controversial. Makes several contacts with the 16S rRNA in the 70S ribosome. This chain is Large ribosomal subunit protein uL2, found in Neisseria meningitidis serogroup B (strain ATCC BAA-335 / MC58).